The primary structure comprises 388 residues: Mycinamicin VIII C21 methyl hydroxylase (388 aa).

Positions 87, 91, 279, 335, and 337 each coordinate heme.

This sequence belongs to the cytochrome P450 family. The cofactor is heme.

The protein operates within antibiotic biosynthesis; mycinamicin biosynthesis. Functionally, involved in the biosynthesis of mycinamicin, a 16-membered macrolide antibiotic. Catalyzes hydroxylation at the C21 methyl group of mycinamicin VIII, the earliest macrolide form in the postpolyketide synthase tailoring pathway, leading to mycinamicin VII. Uses ferredoxin MycCII in electron transfer for catalysis. The protein is Mycinamicin VIII C21 methyl hydroxylase of Micromonospora griseorubida.